The following is a 351-amino-acid chain: Fructose-1,6-bisphosphatase class 1 1 (351 aa).

Mg(2+)-binding residues include Glu-84, Asp-106, Leu-108, and Asp-109. Substrate-binding positions include 109–112 (DGSS) and Asn-205. Glu-277 is a Mg(2+) binding site.

This sequence belongs to the FBPase class 1 family. In terms of assembly, homotetramer. Mg(2+) serves as cofactor.

It is found in the cytoplasm. The enzyme catalyses beta-D-fructose 1,6-bisphosphate + H2O = beta-D-fructose 6-phosphate + phosphate. It participates in carbohydrate biosynthesis; Calvin cycle. The protein is Fructose-1,6-bisphosphatase class 1 1 of Methylibium petroleiphilum (strain ATCC BAA-1232 / LMG 22953 / PM1).